The following is a 107-amino-acid chain: Nucleoid-associated protein A1I_00660 (107 aa).

Residues 81–107 (KCDSDSQNSMSGALSGMSLPPGFKMPF) form a disordered region.

This sequence belongs to the YbaB/EbfC family. Homodimer.

Its subcellular location is the cytoplasm. The protein resides in the nucleoid. In terms of biological role, binds to DNA and alters its conformation. May be involved in regulation of gene expression, nucleoid organization and DNA protection. This chain is Nucleoid-associated protein A1I_00660, found in Rickettsia bellii (strain OSU 85-389).